A 227-amino-acid polypeptide reads, in one-letter code: 7-cyano-7-deazaguanine synthase (227 aa).

8–18 contributes to the ATP binding site; the sequence is VSGGADSATVL. Residues cysteine 192, cysteine 202, cysteine 205, and cysteine 208 each contribute to the Zn(2+) site.

This sequence belongs to the QueC family. The cofactor is Zn(2+).

It catalyses the reaction 7-carboxy-7-deazaguanine + NH4(+) + ATP = 7-cyano-7-deazaguanine + ADP + phosphate + H2O + H(+). Its pathway is purine metabolism; 7-cyano-7-deazaguanine biosynthesis. Its function is as follows. Catalyzes the ATP-dependent conversion of 7-carboxy-7-deazaguanine (CDG) to 7-cyano-7-deazaguanine (preQ(0)). This is 7-cyano-7-deazaguanine synthase from Rickettsia akari (strain Hartford).